The following is a 135-amino-acid chain: Small ribosomal subunit protein uS12 (135 aa).

3-methylthioaspartic acid is present on D89. Residues 103–135 (DTAGVKNRMQSRSKYGTKRPKPGQAAAPAGKKR) are disordered. A compositionally biased stretch (basic residues) spans 111–123 (MQSRSKYGTKRPK). Residues 124–135 (PGQAAAPAGKKR) show a composition bias toward low complexity.

It belongs to the universal ribosomal protein uS12 family. As to quaternary structure, part of the 30S ribosomal subunit. Contacts proteins S8 and S17. May interact with IF1 in the 30S initiation complex.

In terms of biological role, with S4 and S5 plays an important role in translational accuracy. Its function is as follows. Interacts with and stabilizes bases of the 16S rRNA that are involved in tRNA selection in the A site and with the mRNA backbone. Located at the interface of the 30S and 50S subunits, it traverses the body of the 30S subunit contacting proteins on the other side and probably holding the rRNA structure together. The combined cluster of proteins S8, S12 and S17 appears to hold together the shoulder and platform of the 30S subunit. The protein is Small ribosomal subunit protein uS12 of Gloeobacter violaceus (strain ATCC 29082 / PCC 7421).